A 630-amino-acid polypeptide reads, in one-letter code: tRNA uridine 5-carboxymethylaminomethyl modification enzyme MnmG (630 aa).

Gly-13–Gly-18 provides a ligand contact to FAD. Gly-273–Phe-287 lines the NAD(+) pocket.

This sequence belongs to the MnmG family. In terms of assembly, homodimer. Heterotetramer of two MnmE and two MnmG subunits. FAD is required as a cofactor.

Its subcellular location is the cytoplasm. Its function is as follows. NAD-binding protein involved in the addition of a carboxymethylaminomethyl (cmnm) group at the wobble position (U34) of certain tRNAs, forming tRNA-cmnm(5)s(2)U34. The chain is tRNA uridine 5-carboxymethylaminomethyl modification enzyme MnmG from Pseudomonas entomophila (strain L48).